The following is a 525-amino-acid chain: GMP synthase [glutamine-hydrolyzing] (525 aa).

The Glutamine amidotransferase type-1 domain maps to 9 to 207 (RILILDFGSQ…VRDICQCEAL (199 aa)). Catalysis depends on C86, which acts as the Nucleophile. Residues H181 and E183 contribute to the active site. The GMPS ATP-PPase domain occupies 208 to 400 (WTPAKIIDDA…LGLPYDMLYR (193 aa)). Residue 235 to 241 (SGGVDSS) coordinates ATP.

In terms of assembly, homodimer.

It carries out the reaction XMP + L-glutamine + ATP + H2O = GMP + L-glutamate + AMP + diphosphate + 2 H(+). The protein operates within purine metabolism; GMP biosynthesis; GMP from XMP (L-Gln route): step 1/1. Its function is as follows. Catalyzes the synthesis of GMP from XMP. This Salmonella schwarzengrund (strain CVM19633) protein is GMP synthase [glutamine-hydrolyzing].